The chain runs to 118 residues: Large ribosomal subunit protein bL17 (118 aa).

The protein belongs to the bacterial ribosomal protein bL17 family. As to quaternary structure, part of the 50S ribosomal subunit. Contacts protein L32.

The chain is Large ribosomal subunit protein bL17 from Hydrogenobaculum sp. (strain Y04AAS1).